Consider the following 27-residue polypeptide: Palustrin-1d (27 aa).

Residues Cys21 and Cys27 are joined by a disulfide bond.

In terms of tissue distribution, expressed by the skin glands.

It localises to the secreted. Functionally, antimicrobial activity against Gram-negative bacterium E.coli. In Lithobates palustris (Pickerel frog), this protein is Palustrin-1d.